We begin with the raw amino-acid sequence, 436 residues long: Phosphate-repressible acid phosphatase (436 aa).

The first 20 residues, 1–20 (MKGTAASALLIALSATAAQA), serve as a signal peptide directing secretion. Residues N227, N283, and N304 are each glycosylated (N-linked (GlcNAc...) asparagine).

In terms of assembly, monomer.

It carries out the reaction a phosphate monoester + H2O = an alcohol + phosphate. The sequence is that of Phosphate-repressible acid phosphatase (pacA) from Aspergillus niger.